A 504-amino-acid chain; its full sequence is MHPSAGVNNNQHLNHQPYQQMSHYNAQQMHQQQLHHQLMTPNPYQQHFQQQMHPQLHHEDHLNMHFNPMSYPQQQQQQQQQQQQQQQHLHHFGHQIPAPPAQQGPTPQQPHLHQQIPHPLSHHQTPQPTPQPLAQQQSPQPARQPRQTKKQKQQAQNQDQADAQSQAQQHHMAMMARANQNDMLESSTRKVAPRSSDLFRVGPPFSISKQHQPVYCVGTDMPVTPLLHARIDRGFEMGETGSWIGYKRNYFTLVASFTLQDFDFEKFIGNKFYTYDKVNNKVNGFPPHHPSHPQNQPQNHPGHPHHNQHAGESRVPISYFAIRLVAKCSDEDVAISLIQHTAKRDKGPQFPPPIYPAVPSELPDHETVKVSCNKRNNNKIETMNKIFYFDRGNYYQEYNLDSYKDQSILKSYPSQSISKVARFERIQFTSSIRVKSTNTTARYFTLHVELLGIIEDEDLQIQPILLSSIESPPLIVRGRSPSSYHKDRTSGYRATNTPTPTPPQ.

Disordered stretches follow at residues 64 to 172, 283 to 310, and 477 to 504; these read MHFN…QHHM, NGFP…NQHA, and RGRS…TPPQ. Low complexity-rich tracts occupy residues 73-87, 103-145, 153-172, and 292-301; these read QQQQ…QQQQ, QGPT…ARQP, QQAQ…QHHM, and HPQNQPQNHP. A DNA-binding region (NDT80) is located at residues 160-488; that stretch reads QADAQSQAQQ…RSPSSYHKDR (329 aa).

It is found in the nucleus. Its function is as follows. Meiosis-specific transcription factor that binds to the middle sporulation element (MSE) of targeted genes corresponding to the consensus sequence 5'-ACACAAA-3'. Acts as an activator of CDR1 induction by antifungal drugs. Modulates azole sensitivity by controlling the expression of ergosterol biosynthesis genes. Required for hyphal growth in response to different filament-inducing cues and for the proper expression of genes characterizing the filamentous transcriptional program including noteworthy genes encoding cell wall components, such as HWP1, ECE1, RBT4, and ALS3. Is essential for the completion of cell separation through the direct transcriptional regulation of genes encoding the chitinase CHT3 and the cell wall glucosidase SUN41. Required for biofilm formation and plays a key role in microcolony formation under both flow and static conditions and to epithelial surfaces. Essential for virulence. The chain is Transcription factor NDT80 from Candida albicans (strain SC5314 / ATCC MYA-2876) (Yeast).